Consider the following 712-residue polypeptide: Polyribonucleotide nucleotidyltransferase (712 aa).

Mg(2+) contacts are provided by D487 and D493. A KH domain is found at 554 to 613 (PKIITMTINPDKIRDVIGPSGKQINKIIEETGVKIDIEQDGTVFISSINQEMNDKAKKII). One can recognise an S1 motif domain in the interval 623 to 691 (GEIYEGKVKR…KQGRVNLSRK (69 aa)).

The protein belongs to the polyribonucleotide nucleotidyltransferase family. Mg(2+) is required as a cofactor.

Its subcellular location is the cytoplasm. The catalysed reaction is RNA(n+1) + phosphate = RNA(n) + a ribonucleoside 5'-diphosphate. In terms of biological role, involved in mRNA degradation. Catalyzes the phosphorolysis of single-stranded polyribonucleotides processively in the 3'- to 5'-direction. The chain is Polyribonucleotide nucleotidyltransferase from Bacillus cereus (strain AH820).